The primary structure comprises 596 residues: MAKGRKLPSVMKNRFSEVPTATIRRSSFDRSHGYKTTFDMDYLVPFFVDEVLPGDTFSLSETHLCRLTTLVQPIMDNIQLTTQFFFVPNRLLWDNWESFITGGDEPVAWTSTNPANEYFVPQVTSPDGGYAENSIYDYFGLPTKVANYRHQVLPLRAYNLIFNEYYRDENLQESLPVWTGDADPKVDPTTGEESQEDDAVPYVYKLMRRNKRYDYFTSALPGLQKGPSVGIGITGGDSGRLPVHGLAIRSYLDDSSDDQFSFGVSYVNASQKWFTADGRLTSGMGSVPVGTTGNFPIDNVVYPSYFGTTVAQTGSPSSSSTPPFVKGDFPVYVDLAASSSVTINSLRNAITLQQWFEKSARYGSRYVESVQGHFGVHLGDYRAQRPIYLGGSKSYVSVNPVVQNSSTDSVSPQGNLSAYALSTDTKHLFTKSFVEHGFVIGLLSATADLTYQQGLERQWSRFSRYDYYWPTFAHLGEQPVYNKEIYCQSDTVMDPSGSAVNDVPFGYQERYAEYRYKPSKVTGLFRSNATGTLDSWHLSQNFANLPTLNETFIQSNTPIDRALAVPDQPDFICDFYFNYRCIRPMPVYSVPGLRRI.

This sequence belongs to the microviridae F protein family.

It is found in the virion. The protein resides in the host cytoplasm. Functionally, assembles to form an icosahedral capsid with a T=1 symmetry. This is Capsid protein VP1 from Chlamydia phage 1 (Bacteriophage Chp1).